The following is a 159-amino-acid chain: 2-C-methyl-D-erythritol 2,4-cyclodiphosphate synthase (159 aa).

2 residues coordinate a divalent metal cation: Asp-10 and His-12. 4-CDP-2-C-methyl-D-erythritol 2-phosphate-binding positions include 10-12 (DVH) and 36-37 (HS). His-44 is a binding site for a divalent metal cation. 4-CDP-2-C-methyl-D-erythritol 2-phosphate contacts are provided by residues 58–60 (DIG), 63–67 (FPDTD), 102–108 (AQAPKMA), 134–137 (TTTE), Phe-141, and Arg-144.

It belongs to the IspF family. Homotrimer. It depends on a divalent metal cation as a cofactor.

It catalyses the reaction 4-CDP-2-C-methyl-D-erythritol 2-phosphate = 2-C-methyl-D-erythritol 2,4-cyclic diphosphate + CMP. It participates in isoprenoid biosynthesis; isopentenyl diphosphate biosynthesis via DXP pathway; isopentenyl diphosphate from 1-deoxy-D-xylulose 5-phosphate: step 4/6. Involved in the biosynthesis of isopentenyl diphosphate (IPP) and dimethylallyl diphosphate (DMAPP), two major building blocks of isoprenoid compounds. Catalyzes the conversion of 4-diphosphocytidyl-2-C-methyl-D-erythritol 2-phosphate (CDP-ME2P) to 2-C-methyl-D-erythritol 2,4-cyclodiphosphate (ME-CPP) with a corresponding release of cytidine 5-monophosphate (CMP). This Shewanella halifaxensis (strain HAW-EB4) protein is 2-C-methyl-D-erythritol 2,4-cyclodiphosphate synthase.